The chain runs to 863 residues: Major vault protein (863 aa).

9 MVP repeats span residues 2 to 60, 61 to 115, 116 to 168, 169 to 221, 222 to 276, 277 to 327, 328 to 396, 397 to 471, and 472 to 534; these read DADH…VPPR, HYCV…DVTP, LQIV…EVIK, ATVI…DIVS, AFIL…GVVD, VTTL…IQDV, YVLS…TRTA, IPLD…KTRV, and VSYR…LLGP. The segment at 349 to 368 is disordered; sequence GDEAEEEERESRAKKRGVQR. The IQ domain maps to 677 to 706; the sequence is ARHEAERLEQEARGRLERQKITDQAEAEKA.

In terms of assembly, the vault ribonucleoprotein particle is a huge (400 A x 670 A) cage structure of 12.9 MDa. It consists of a dimer of half-vaults, with each half-vault comprising 39 identical major vault protein (MVP) chains, PARP4 and one or more vault RNAs (vRNAs).

The protein resides in the cytoplasm. It is found in the nucleus. Functionally, required for normal vault structure. Vaults are multi-subunit structures that may act as scaffolds for proteins involved in signal transduction. Vaults may also play a role in nucleo-cytoplasmic transport. The protein is Major vault protein (mvp) of Danio rerio (Zebrafish).